An 873-amino-acid polypeptide reads, in one-letter code: Bifunctional uridylyltransferase/uridylyl-removing enzyme (873 aa).

The segment at 1–332 (MAFQSPLTFN…NGGETEPAVI (332 aa)) is uridylyltransferase. The segment at 333 to 692 (INEDFQRRGR…MSKKATRGGT (360 aa)) is uridylyl-removing. Residues 451 to 573 (VDEHSVRLLN…VRDEERLEYL (123 aa)) enclose the HD domain. ACT domains lie at 693–773 (EVFV…VKTR) and 800–873 (LMEL…ELAP).

The protein belongs to the GlnD family. Mg(2+) serves as cofactor.

It carries out the reaction [protein-PII]-L-tyrosine + UTP = [protein-PII]-uridylyl-L-tyrosine + diphosphate. The catalysed reaction is [protein-PII]-uridylyl-L-tyrosine + H2O = [protein-PII]-L-tyrosine + UMP + H(+). With respect to regulation, uridylyltransferase (UTase) activity is inhibited by glutamine, while glutamine activates uridylyl-removing (UR) activity. Its function is as follows. Modifies, by uridylylation and deuridylylation, the PII regulatory proteins (GlnB and homologs), in response to the nitrogen status of the cell that GlnD senses through the glutamine level. Under low glutamine levels, catalyzes the conversion of the PII proteins and UTP to PII-UMP and PPi, while under higher glutamine levels, GlnD hydrolyzes PII-UMP to PII and UMP (deuridylylation). Thus, controls uridylylation state and activity of the PII proteins, and plays an important role in the regulation of nitrogen assimilation and metabolism. The chain is Bifunctional uridylyltransferase/uridylyl-removing enzyme from Vibrio vulnificus (strain CMCP6).